The chain runs to 110 residues: Thiosulfate sulfurtransferase GlpE (110 aa).

A Rhodanese domain is found at 17-105 (RENGAQVVDI…WRSVYPADTS (89 aa)). The Cysteine persulfide intermediate role is filled by Cys-65.

This sequence belongs to the GlpE family.

The protein resides in the cytoplasm. It catalyses the reaction thiosulfate + hydrogen cyanide = thiocyanate + sulfite + 2 H(+). It carries out the reaction thiosulfate + [thioredoxin]-dithiol = [thioredoxin]-disulfide + hydrogen sulfide + sulfite + 2 H(+). In terms of biological role, transferase that catalyzes the transfer of sulfur from thiosulfate to thiophilic acceptors such as cyanide or dithiols. May function in a CysM-independent thiosulfate assimilation pathway by catalyzing the conversion of thiosulfate to sulfite, which can then be used for L-cysteine biosynthesis. This Pseudomonas paraeruginosa (strain DSM 24068 / PA7) (Pseudomonas aeruginosa (strain PA7)) protein is Thiosulfate sulfurtransferase GlpE.